A 428-amino-acid polypeptide reads, in one-letter code: MGNKVVVGTQWGDEGKGKITDMLARTADVVVRYGGGNNAGHTVIVDGKKFELHLIPSGILYPEKVNVIGNGVVVDPEALVEEMNMLKEEGISLNNLYVSETAHVIMPYHRLLDKLEEKRKGDGKIGTTGRGIGPAYTDKVARRGLRVIDLLDEDTFYEKLKLALDYQNLLLEKVYQVEPMDIKEIMAQYKEYIEVLRPHVTNTSLLLDEAIKEDKKIFFEGAQGTLLDIDYGTYPYVTSSNPTAGGVCTGTGVGPVWIDDVIGVVKAYLTRVGEGPFPTELNNDIGDKLRDKGHEYGVTTGRPRRCGWLDIPILKHAVRVNGLTELALTKLDVLSGLREVKVCTGYRYGDRLIEEFPGNIDILSGCEPVYEVLPGWDDDITGVREYGDLPENARRYVKLIEDMVKVPVTIIGVGPGRKEAIRREKEVN.

Residues 12–18 (GDEGKGK) and 40–42 (GHT) contribute to the GTP site. Asp13 serves as the catalytic Proton acceptor. Mg(2+)-binding residues include Asp13 and Gly40. Residues 13–16 (DEGK), 38–41 (NAGH), Thr128, Arg142, Gln223, Thr238, and Arg302 contribute to the IMP site. The Proton donor role is filled by His41. Substrate is bound at residue 298–304 (VTTGRPR). Residues Arg304, 330 to 332 (KLD), and 412 to 414 (GVG) each bind GTP.

The protein belongs to the adenylosuccinate synthetase family. Homodimer. Requires Mg(2+) as cofactor.

It localises to the cytoplasm. It carries out the reaction IMP + L-aspartate + GTP = N(6)-(1,2-dicarboxyethyl)-AMP + GDP + phosphate + 2 H(+). It functions in the pathway purine metabolism; AMP biosynthesis via de novo pathway; AMP from IMP: step 1/2. Its function is as follows. Plays an important role in the de novo pathway of purine nucleotide biosynthesis. Catalyzes the first committed step in the biosynthesis of AMP from IMP. This Halothermothrix orenii (strain H 168 / OCM 544 / DSM 9562) protein is Adenylosuccinate synthetase.